Reading from the N-terminus, the 269-residue chain is Photosystem I assembly factor PSA3, chloroplastic (269 aa).

The transit peptide at 1 to 37 directs the protein to the chloroplast; the sequence is MGALPVAHSLALTAAFLPCRRPAAHGRCRRRRYRAVV.

The protein localises to the plastid. It localises to the chloroplast thylakoid membrane. Nuclear genome-encoded factor required for the accumulation of photosystem I (PSI). Functions as a PSI biogenesis factor. Cooperates with PYG7 to promote the stable assembly of PSI in the thylakoid membrane. May target primarily the PsaC subunit. Does not seem to be required for the expression of chloroplast genes encoding PSI subunits. This chain is Photosystem I assembly factor PSA3, chloroplastic, found in Zea mays (Maize).